The sequence spans 567 residues: Synaptotagmin-like protein 1 (567 aa).

One can recognise a RabBD domain in the interval 31–87 (LLDLSFLTEEEQEAISDVLKRDAHLRQLEEGRVSKLRASLEDPWQLKILTGDWFQEA). The tract at residues 103 to 255 (RASIRRKKSP…VSSLNSSTLS (153 aa)) is disordered. The residue at position 120 (serine 120) is a Phosphoserine. Acidic residues-rich tracts occupy residues 122–135 (GEAE…IEGE) and 170–184 (GQEE…ELEA). A compositionally biased stretch (polar residues) spans 208–219 (ESQPTPAQSKAT). A Phosphoserine modification is found at serine 220. Positions 235-255 (SLDRMLSSSSSVSSLNSSTLS) are enriched in low complexity. C2 domains are found at residues 271 to 390 (VRGS…WLPL) and 403 to 532 (SRGL…VPWM).

As to quaternary structure, monomer. Binds NCF2 and NRXN1. Binds RAB27A that has been activated by GTP-binding via its N-terminus. Highly expressed in lung. Detected at lower levels in spleen, liver and kidney, and at very low levels in heart, brain and skeletal muscle. Expressed in cytotoxic T-lymphocytes (CTL).

It is found in the endomembrane system. The protein localises to the cell membrane. Its function is as follows. Binds phosphatidylinositol 3,4,5-trisphosphate. May play a role in vesicle trafficking. Acts as a RAB27A effector protein and may play a role in cytotoxic granule exocytosis in lymphocytes. In Mus musculus (Mouse), this protein is Synaptotagmin-like protein 1 (Sytl1).